A 171-amino-acid polypeptide reads, in one-letter code: Ribosome-binding factor A (171 aa).

The span at 126–138 (VREGAKHAGDADP) shows a compositional bias: basic and acidic residues. The tract at residues 126-171 (VREGAKHAGDADPYRVSGVEEEAGGSGEVQAEFDAEDTGDRNRQDD) is disordered.

It belongs to the RbfA family. In terms of assembly, monomer. Binds 30S ribosomal subunits, but not 50S ribosomal subunits or 70S ribosomes.

Its subcellular location is the cytoplasm. In terms of biological role, one of several proteins that assist in the late maturation steps of the functional core of the 30S ribosomal subunit. Associates with free 30S ribosomal subunits (but not with 30S subunits that are part of 70S ribosomes or polysomes). Required for efficient processing of 16S rRNA. May interact with the 5'-terminal helix region of 16S rRNA. The polypeptide is Ribosome-binding factor A (Mycobacterium sp. (strain JLS)).